Here is a 392-residue protein sequence, read N- to C-terminus: Branched-chain-amino-acid aminotransferase, mitochondrial (392 aa).

Residues 1 to 27 (MAAAALGQIWARKFLSVPWLLCGPRRY) constitute a mitochondrion transit peptide. Tyr168 is a substrate binding site. Lys229 carries the N6-(pyridoxal phosphate)lysine modification. Position 321 is an N6-acetyllysine (Lys321).

The protein belongs to the class-IV pyridoxal-phosphate-dependent aminotransferase family. Homodimer. Requires pyridoxal 5'-phosphate as cofactor.

Its subcellular location is the mitochondrion. The enzyme catalyses L-leucine + 2-oxoglutarate = 4-methyl-2-oxopentanoate + L-glutamate. It catalyses the reaction L-isoleucine + 2-oxoglutarate = (S)-3-methyl-2-oxopentanoate + L-glutamate. It carries out the reaction L-valine + 2-oxoglutarate = 3-methyl-2-oxobutanoate + L-glutamate. Catalyzes the first reaction in the catabolism of the essential branched chain amino acids leucine, isoleucine, and valine. May also function as a transporter of branched chain alpha-keto acids. The chain is Branched-chain-amino-acid aminotransferase, mitochondrial (BCAT2) from Pongo abelii (Sumatran orangutan).